A 393-amino-acid polypeptide reads, in one-letter code: Small RNA 2'-O-methyltransferase (393 aa).

The S-adenosyl-L-methionine site is built by serine 60, aspartate 78, and serine 114. Residues glutamate 132, glutamate 135, histidine 136, and histidine 181 each coordinate Mg(2+). Residues 283-309 (RVSHLPRRKEQDGEQGDKPKDIGGSKA) form a disordered region. A compositionally biased stretch (basic and acidic residues) spans 290–305 (RKEQDGEQGDKPKDIG).

This sequence belongs to the methyltransferase superfamily. HEN1 family. Requires Mg(2+) as cofactor.

The protein localises to the cytoplasm. It catalyses the reaction small RNA 3'-end nucleotide + S-adenosyl-L-methionine = small RNA 3'-end 2'-O-methylnucleotide + S-adenosyl-L-homocysteine + H(+). Functionally, methyltransferase that adds a 2'-O-methyl group at the 3'-end of piRNAs, a class of 24 to 30 nucleotide RNAs that are generated by a Dicer-independent mechanism and are primarily derived from transposons and other repeated sequence elements. This probably protects the 3'-end of piRNAs from uridylation activity and subsequent degradation. Stabilization of piRNAs is essential for gametogenesis. The polypeptide is Small RNA 2'-O-methyltransferase (HENMT1) (Macaca fascicularis (Crab-eating macaque)).